Reading from the N-terminus, the 243-residue chain is MKSDKTPKINKFIRRLYKIVNDNSFSEIQWTTDGLRFYITDKTAFMLNGLKYLSKTTEYSAFVRLLYVYGFSKSKSLNAYEEEYYHKNFKRDGDNLLPCIQRTVETKTTLLQKNTNRTPNQLQDLLQYLNNQNFKLEGEIKSLKDRVDQQDCTINGLVQLLTRIFRTNDSNKDMLLPLNITEHGSPINNELRINYDKNQVARLMADTPNIDGRLENTNIELSNNKNFLFDSDDEDSIYKTNFF.

Residues 9-102 (INKFIRRLYK…GDNLLPCIQR (94 aa)) mediate DNA binding. The involved in trimerization stretch occupies residues 121 to 164 (QLQDLLQYLNNQNFKLEGEIKSLKDRVDQQDCTINGLVQLLTRI).

The protein belongs to the HSF family. Homotrimer. Homotrimerization increases the affinity of HSF1 to DNA.

The protein localises to the nucleus. DNA-binding transcription factor that specifically binds heat shock promoter elements (HSE) and activates transcription. The sequence is that of Probable heat shock transcription factor from Vairimorpha ceranae (strain BRL01) (Microsporidian parasite).